The following is a 141-amino-acid chain: MMRTLFKSKIHRATVTQADLHYVGSVTVDAALMEAADLLPGELVHIVDIDNGARLETYVIEGERGSGVIGINGAAAHLVHPGDLVILISYAQVDDAEARAFVPRVVHVDADNRIVALGSDASAPVPGSRTERSPQAVVAGG.

S25 (schiff-base intermediate with substrate; via pyruvic acid) is an active-site residue. Position 25 is a pyruvic acid (Ser) (S25). Residue T57 coordinates substrate. Catalysis depends on Y58, which acts as the Proton donor. 73-75 (GAA) lines the substrate pocket. Residues 121-141 (ASAPVPGSRTERSPQAVVAGG) form a disordered region.

This sequence belongs to the PanD family. As to quaternary structure, heterooctamer of four alpha and four beta subunits. Requires pyruvate as cofactor. In terms of processing, is synthesized initially as an inactive proenzyme, which is activated by self-cleavage at a specific serine bond to produce a beta-subunit with a hydroxyl group at its C-terminus and an alpha-subunit with a pyruvoyl group at its N-terminus.

The protein resides in the cytoplasm. It carries out the reaction L-aspartate + H(+) = beta-alanine + CO2. Its pathway is cofactor biosynthesis; (R)-pantothenate biosynthesis; beta-alanine from L-aspartate: step 1/1. Its function is as follows. Catalyzes the pyruvoyl-dependent decarboxylation of aspartate to produce beta-alanine. In Streptomyces griseus subsp. griseus (strain JCM 4626 / CBS 651.72 / NBRC 13350 / KCC S-0626 / ISP 5235), this protein is Aspartate 1-decarboxylase.